The chain runs to 45 residues: Large ribosomal subunit protein bL34 (45 aa).

Belongs to the bacterial ribosomal protein bL34 family.

The sequence is that of Large ribosomal subunit protein bL34 from Leifsonia xyli subsp. xyli (strain CTCB07).